The following is a 173-amino-acid chain: DASH complex subunit SPC19 (173 aa).

The protein belongs to the DASH complex SPC19 family. As to quaternary structure, component of the DASH complex consisting of ASK1, DAD1, DAD2, DAD3, DAD4, DAM1, DUO1, HSK3, SPC19 and SPC34, with a stoichiometry of one copy of each subunit per complex. Multiple DASH complexes oligomerize to form a ring that encircles spindle microtubules and organizes the rod-like NDC80 complexes of the outer kinetochore. DASH complex oligomerization strengthens microtubule attachments. On cytoplasmic microtubules, DASH complexes appear to form patches instead of rings.

The protein localises to the nucleus. It is found in the cytoplasm. Its subcellular location is the cytoskeleton. It localises to the spindle. The protein resides in the chromosome. The protein localises to the centromere. It is found in the kinetochore. Its function is as follows. Component of the DASH complex that connects microtubules with kinetochores and couples microtubule depolymerisation to chromosome movement; it is involved in retrieving kinetochores to the spindle poles before their re-orientation on the spindle in early mitosis and allows microtubule depolymerization to pull chromosomes apart and resist detachment during anaphase. Kinetochores, consisting of a centromere-associated inner segment and a microtubule-contacting outer segment, play a crucial role in chromosome segregation by mediating the physical connection between centromeric DNA and microtubules. Kinetochores also serve as an input point for the spindle assembly checkpoint, which delays anaphase until all chromosomes have bioriented on the mitotic spindle. In Chaetomium thermophilum (strain DSM 1495 / CBS 144.50 / IMI 039719) (Thermochaetoides thermophila), this protein is DASH complex subunit SPC19.